A 340-amino-acid chain; its full sequence is uncharacterized protein (340 aa).

2 consecutive transmembrane segments (helical) span residues 162-182 (PLVP…VLAG) and 239-259 (FWIA…IVVP).

It localises to the cell membrane. This is an uncharacterized protein from Mycobacterium tuberculosis (strain CDC 1551 / Oshkosh).